The following is a 152-amino-acid chain: Aspartate carbamoyltransferase regulatory chain (152 aa).

Zn(2+) is bound by residues C108, C113, C137, and C140.

Belongs to the PyrI family. In terms of assembly, contains catalytic and regulatory chains. Zn(2+) is required as a cofactor.

Involved in allosteric regulation of aspartate carbamoyltransferase. The protein is Aspartate carbamoyltransferase regulatory chain of Neisseria meningitidis serogroup B (strain ATCC BAA-335 / MC58).